The sequence spans 260 residues: Thiazole synthase (260 aa).

Lys-100 functions as the Schiff-base intermediate with DXP in the catalytic mechanism. Residues Gly-161, 187 to 188 (AG), and 209 to 210 (NT) contribute to the 1-deoxy-D-xylulose 5-phosphate site.

The protein belongs to the ThiG family. In terms of assembly, homotetramer. Forms heterodimers with either ThiH or ThiS.

The protein localises to the cytoplasm. The catalysed reaction is [ThiS sulfur-carrier protein]-C-terminal-Gly-aminoethanethioate + 2-iminoacetate + 1-deoxy-D-xylulose 5-phosphate = [ThiS sulfur-carrier protein]-C-terminal Gly-Gly + 2-[(2R,5Z)-2-carboxy-4-methylthiazol-5(2H)-ylidene]ethyl phosphate + 2 H2O + H(+). It functions in the pathway cofactor biosynthesis; thiamine diphosphate biosynthesis. Functionally, catalyzes the rearrangement of 1-deoxy-D-xylulose 5-phosphate (DXP) to produce the thiazole phosphate moiety of thiamine. Sulfur is provided by the thiocarboxylate moiety of the carrier protein ThiS. In vitro, sulfur can be provided by H(2)S. The chain is Thiazole synthase from Dechloromonas aromatica (strain RCB).